Consider the following 587-residue polypeptide: Protein POF1B (587 aa).

Positions 331–529 (STFSNIREEL…EELSKLRQEI (199 aa)) form a coiled coil.

In terms of assembly, interacts with nonmuscle actin. As to expression, expression absent in adult ovary.

The protein localises to the cell junction. It is found in the tight junction. Plays a key role in the organization of epithelial monolayers by regulating the actin cytoskeleton. May be involved in ovary development. This Mus musculus (Mouse) protein is Protein POF1B (Pof1b).